The sequence spans 104 residues: Integration host factor subunit beta (104 aa).

Residues 83-95 (GKEMRERLNRDSG) are compositionally biased toward basic and acidic residues. A disordered region spans residues 83–104 (GKEMRERLNRDSGDDAPTSDTA).

Belongs to the bacterial histone-like protein family. Heterodimer of an alpha and a beta chain.

This protein is one of the two subunits of integration host factor, a specific DNA-binding protein that functions in genetic recombination as well as in transcriptional and translational control. The sequence is that of Integration host factor subunit beta from Rhodopseudomonas palustris (strain ATCC BAA-98 / CGA009).